The sequence spans 345 residues: MSLTYRDAGVDIDEGDRLVDLIKPHARPTLRPEVLGGIGGFGGLFALDVKKYREPVLVSGTDGVGTKLKVAFAADRHDTVGIDLVAMCVNDIAVVGAEPLFFLDYYATGKLSAEQGAEVVKGIAEGCRQAGCALIGGETAELPGFYARGEYDLAGFAVGCVDRPRIVDGTRVARGDVVIGIASSGLHSNGFSLARKALLDRYPLDHRFEGLGGRTLADALLEPTRIYAKDVLALLDQVPVRAFAHITGGGLPGNVPRTLPDGTRAVLEEKRWPRPAIFDVVEREGQVPRDEMYRTFNMGLGLVAVVAPGDEAAAHAALRARGLEAWTVGAIEAGGPGEATCEVVR.

Belongs to the AIR synthase family.

It is found in the cytoplasm. The enzyme catalyses 2-formamido-N(1)-(5-O-phospho-beta-D-ribosyl)acetamidine + ATP = 5-amino-1-(5-phospho-beta-D-ribosyl)imidazole + ADP + phosphate + H(+). Its pathway is purine metabolism; IMP biosynthesis via de novo pathway; 5-amino-1-(5-phospho-D-ribosyl)imidazole from N(2)-formyl-N(1)-(5-phospho-D-ribosyl)glycinamide: step 2/2. The chain is Phosphoribosylformylglycinamidine cyclo-ligase from Anaeromyxobacter dehalogenans (strain 2CP-C).